Reading from the N-terminus, the 317-residue chain is Putative 2-hydroxyacid dehydrogenase SA2098 (317 aa).

NAD(+)-binding positions include 155–156 (EI), 234–236 (ASR), and D260. R236 is an active-site residue. E265 is a catalytic residue. H283 serves as the catalytic Proton donor. 283–286 (HIGN) provides a ligand contact to NAD(+).

The protein belongs to the D-isomer specific 2-hydroxyacid dehydrogenase family.

This chain is Putative 2-hydroxyacid dehydrogenase SA2098, found in Staphylococcus aureus (strain N315).